The primary structure comprises 618 residues: 1-deoxy-D-xylulose-5-phosphate synthase (618 aa).

Residues His-77 and 118 to 120 (GHS) each bind thiamine diphosphate. Position 149 (Asp-149) interacts with Mg(2+). Thiamine diphosphate is bound by residues 150 to 151 (GA), Asn-178, Tyr-285, and Glu-367. Asn-178 contributes to the Mg(2+) binding site.

This sequence belongs to the transketolase family. DXPS subfamily. Homodimer. Mg(2+) serves as cofactor. It depends on thiamine diphosphate as a cofactor.

It carries out the reaction D-glyceraldehyde 3-phosphate + pyruvate + H(+) = 1-deoxy-D-xylulose 5-phosphate + CO2. The protein operates within metabolic intermediate biosynthesis; 1-deoxy-D-xylulose 5-phosphate biosynthesis; 1-deoxy-D-xylulose 5-phosphate from D-glyceraldehyde 3-phosphate and pyruvate: step 1/1. Functionally, catalyzes the acyloin condensation reaction between C atoms 2 and 3 of pyruvate and glyceraldehyde 3-phosphate to yield 1-deoxy-D-xylulose-5-phosphate (DXP). The protein is 1-deoxy-D-xylulose-5-phosphate synthase of Idiomarina loihiensis (strain ATCC BAA-735 / DSM 15497 / L2-TR).